The following is a 500-amino-acid chain: Tyrosine decarboxylase 2 (500 aa).

A run of 2 repeats spans residues 65 to 122 (EDIR…TELE) and 125 to 176 (VLDW…GKRS). Positions 65 to 176 (EDIRQKIVPG…KFLNRFGKRS (112 aa)) are 2 X approximate tandem repeats. Serine 89 contributes to the substrate binding site. Positions 153 and 154 each coordinate pyridoxal 5'-phosphate. Histidine 189 contributes to the substrate binding site. Pyridoxal 5'-phosphate-binding residues include threonine 248 and asparagine 302. Position 305 is an N6-(pyridoxal phosphate)lysine (lysine 305).

This sequence belongs to the group II decarboxylase family. The cofactor is pyridoxal 5'-phosphate. In terms of tissue distribution, mostly expressed in bulbs, and, to a lower extent, in stems, roots, leaves and flowers.

The catalysed reaction is L-tyrosine + H(+) = tyramine + CO2. The protein operates within alkaloid biosynthesis. Its function is as follows. Catalyzes the decarboxylation of L-tyrosine to tyramine, which is converted to norbelladine, a precursor to all Amaryllidaceae alkaloids such as galanthamine, lycorine and haemanthamine, and including haemanthamine- and crinamine-type alkaloids, promising anticancer agents. The protein is Tyrosine decarboxylase 2 of Narcissus pseudonarcissus (Daffodil).